Here is a 2549-residue protein sequence, read N- to C-terminus: Serine/threonine-protein kinase mTOR (2549 aa).

Met1 carries the post-translational modification N-acetylmethionine. The interval 1–651 (MLGTGPAAAT…HVVSQTAVQV (651 aa)) is interaction with NBN. 32 HEAT repeats span residues 16 to 53 (SSNV…MELR), 55 to 99 (MSQE…VEGG), 100 to 137 (NATR…AMAG), 138 to 179 (DTFT…AISV), 180 to 220 (PTFF…LILT), 222 to 276 (QREP…RISS), 277 to 313 (MEGE…PRHI), 314 to 364 (TPFT…CCRD), 365 to 409 (LMEE…AFTD), 410 to 445 (TQYL…VAVR), 446 to 494 (SEFK…RAMG), 495 to 529 (PGIQ…RQIP), 530 to 563 (QLKK…GLAH), 564 to 596 (QLAS…EFEG), 597 to 636 (HSLT…SIHL), 637 to 683 (ISGH…DERF), 686 to 724 (HLAQ…MNPA), 727 to 766 (MPFL…NAPR), 769 to 811 (RPYM…VSGL), 814 to 853 (RKWV…STGY), 857 to 893 (PYRK…LLGA), 894 to 942 (LDPY…GNLP), 943 to 988 (LDEF…KCVQ), 989 to 1027 (FLPQ…KSHI), 1029 to 1068 (PYMD…GEFK), 1069 to 1105 (LYLP…LFGA), 1106 to 1144 (NLDD…RLTE), 1145 to 1188 (SLDF…GKKY), 1189 to 1225 (QIFI…LADE), 1226 to 1273 (EEDP…GAAR), 1274 to 1311 (RVSK…QAYN), and 1312 to 1345 (PMAR…ELAL). Ser567 carries the phosphoserine modification. Phosphothreonine is present on Thr1162. Lys1218 is modified (N6-acetyllysine). Residue Ser1261 is modified to Phosphoserine. 16 TPR repeats span residues 1346-1382 (TSQD…GIVL), 1383-1408 (LGER…QKGP), 1409-1442 (TPAI…HFGE), 1443-1473 (LEIQ…NKDD), 1474-1507 (PELM…VNDE), 1508-1541 (TQAK…RDTH), 1542-1574 (DGAF…LDAE), 1575-1614 (LTAM…RREI), 1615-1649 (IRQI…PHED), 1650-1693 (MRTW…PTVH), 1694-1731 (PQVT…AQHA), 1732-1786 (IATE…DRSW), 1787-1846 (YKAW…STEG), 1898-1930 (NNLQ…VKAI), 1931-1970 (QIDT…YHPQ), and 1971-2005 (ALIY…SNTL). The FAT domain occupies 1382–1982 (LLGERAAKCR…IYPLTVASKS (601 aa)). Lys1662, Lys1702, and Arg1749 together coordinate 1D-myo-inositol hexakisphosphate. The tract at residues 1812 to 1867 (DEKKKLRHASGANITNATTAATTAATATTTASTEGSNSESEAESTENSPTPSPLQK) is disordered. Over residues 1820–1860 (ASGANITNATTAATTAATATTTASTEGSNSESEAESTENSP) the composition is skewed to low complexity. Positions 2012-2144 (VSEELIRVAI…DLELAVPGTY (133 aa)) are sufficient for interaction with the FKBP1A/rapamycin complex. Lys2066 participates in a covalent cross-link: Glycyl lysine isopeptide (Lys-Gly) (interchain with G-Cter in ubiquitin). The 314-residue stretch at 2156–2469 (IAPSLQVITS…GVELGEPAHK (314 aa)) folds into the PI3K/PI4K catalytic domain. Ser2159 carries the post-translational modification Phosphoserine; by TBK1. Positions 2162 to 2168 (VITSKQR) are G-loop. A Phosphothreonine modification is found at Thr2164. Positions 2165 and 2167 each coordinate ATP. Thr2173 carries the phosphothreonine; by PKB/AKT1 modification. ATP is bound by residues Leu2185, Lys2187, Glu2190, Tyr2225, Gly2238, Trp2239, Val2240, and Thr2245. The interval 2258–2296 (KILLNIEHRIMLRMAPDYDHLTLMQKVEVFEHAVNNTAG) is interaction with MLST8. The segment at 2335–2343 (GLGDRHPSN) is catalytic loop. Residue Asn2343 coordinates Mg(2+). Positions 2345 and 2356 each coordinate ATP. Positions 2355–2380 (HIDFGDCFEVAMTREKFPEKIPFRLT) are activation loop. Residue Asp2357 participates in Mg(2+) binding. Thr2446 bears the Phosphothreonine; by RPS6KB1 mark. Position 2448 is a phosphoserine; by RPS6KB1 (Ser2448). Ser2478 bears the Phosphoserine mark. A Phosphoserine; by autocatalysis modification is found at Ser2481. Residues 2517–2549 (DTLDVPTQVELLIKQATSHENLCQCYIGWCPFW) form the FATC domain.

Belongs to the PI3/PI4-kinase family. In terms of assembly, part of the mechanistic target of rapamycin complex 1 (mTORC1) which contains MTOR, MLST8 and RPTOR. The mTORC1 complex is a 1 Md obligate dimer of two stoichiometric heterotetramers with overall dimensions of 290 A x 210 A x 135 A. It has a rhomboid shape and a central cavity, the dimeric interfaces are formed by interlocking interactions between the two MTOR and the two RPTOR subunits. The MLST8 subunit forms distal foot-like protuberances, and contacts only one MTOR within the complex, while the small AKT1S1/PRAS40 localizes to the midsection of the central core, in close proximity to RPTOR. mTORC1 associates with AKT1S1/PRAS40, which inhibits its activity by blocking MTOR substrate-recruitment site. Component of the mechanistic target of rapamycin complex 2 (mTORC2), consisting in two heterotretramers composed of MTOR, MLST8, RICTOR and MAPKAP1/SIN1. Interacts with PLPP7 and PML. Interacts with PRR5 and RICTOR; the interaction is direct within the mTORC2 complex and interaction with RICTOR is enhanced by deubiquitination of RICTOR by USP9X. mTORC1 and mTORC2 associate with DEPTOR, which regulates their activity. Interacts with WAC; WAC positively regulates MTOR activity by promoting the assembly of the TTT complex composed of TELO2, TTI1 and TTI2 and the RUVBL complex composed of RUVBL1 and RUVBL2 into the TTT-RUVBL complex which leads to the dimerization of the mTORC1 complex and its subsequent activation. Interacts with UBQLN1. Interacts with TTI1 and TELO2. Interacts with CLIP1; phosphorylates and regulates CLIP1. Interacts with NBN. Interacts with HTR6. Interacts with BRAT1. Interacts with MEAK7 (via C-terminal domain); the interaction increases upon nutrient stimulation. Interacts with TM4SF5; the interaction is positively regulated by arginine and is negatively regulated by leucine. Interacts with GPR137B. Interacts with NCKAP1L. Interacts with TPCN1 and TPCN2; the interaction is required for TPCN1 and TPCN2 sensitivity to ATP. Interacts with ATP6V1A and with CRYAB, forming a ternary complex. Interacts with SLC38A7; this interaction mediates the recruitment of mTORC1 to the lysosome and its subsequent activation. Interacts with TSPAN8. In terms of processing, autophosphorylates when part of mTORC1 or mTORC2. Phosphorylation at Ser-1261, Ser-2159 and Thr-2164 promotes autophosphorylation. Phosphorylated at Ser-2448 by RPS6KB1. Phosphorylation in the kinase domain modulates the interactions of MTOR with RPTOR and AKT1S1/PRAS40 and leads to increased intrinsic mTORC1 kinase activity. Phosphorylation at Ser-2159 by TBK1 in response to growth factors and pathogen recognition receptors promotes mTORC1 activity. Phosphorylation at Ser-2159 by TBK1 in response to EGF growth factor promotes mTORC2 activity, leading to AKT1 phosphorylation and activation. Phosphorylation at Thr-2173 in the ATP-binding region by AKT1 strongly reduces kinase activity. Post-translationally, ubiquitinated at Lys-2066 by the SCF(FBXO22) complex via 'Lys-27'-linked ubiquitination prevents mTORC1 substrate recruitment. In terms of tissue distribution, expressed in numerous tissues, with highest levels in testis.

The protein localises to the lysosome membrane. It is found in the endoplasmic reticulum membrane. Its subcellular location is the golgi apparatus membrane. It localises to the cell membrane. The protein resides in the mitochondrion outer membrane. The protein localises to the cytoplasm. It is found in the nucleus. Its subcellular location is the PML body. It localises to the microsome membrane. The protein resides in the cytoplasmic vesicle. The protein localises to the phagosome. It carries out the reaction L-seryl-[protein] + ATP = O-phospho-L-seryl-[protein] + ADP + H(+). The enzyme catalyses L-threonyl-[protein] + ATP = O-phospho-L-threonyl-[protein] + ADP + H(+). It catalyses the reaction L-tyrosyl-[protein] + ATP = O-phospho-L-tyrosyl-[protein] + ADP + H(+). Its activity is regulated as follows. The mTORC1 complex is activated in response to nutrients, growth factors or amino acids: activation requires relocalization of the mTORC1 complex to lysosomes that is mediated by the Ragulator complex, SLC38A9, and the Rag GTPases RagA/RRAGA, RagB/RRAGB, RagC/RRAGC and RagD/RRAGD. Activation of mTORC1 by growth factors such as insulin involves AKT1-mediated phosphorylation of TSC1-TSC2, which leads to the activation of the RHEB GTPase a potent activator of the protein kinase activity of mTORC1. Insulin-stimulated and amino acid-dependent phosphorylation at Ser-1261 promotes autophosphorylation and the activation of mTORC1. On the other hand, low cellular energy levels can inhibit mTORC1 through activation of PRKAA1 while hypoxia inhibits mTORC1 through a REDD1-dependent mechanism which may also require PRKAA1. The kinase activity of MTOR within the mTORC1 complex is positively regulated by MLST8. The kinase activity of MTOR is inhibited by DEPTOR and AKT1S1. The non-canonical mTORC1 complex is independent of the RHEB GTPase and specifically mediates phosphorylation of MiT/TFE factors TFEB and TFE3 but not other mTORC1 substrates: it is activated by FLCN, which activates Rag GTPases RagC/RRAGC and RagD/RRAGD. MTOR is the target of the immunosuppressive and anti-cancer drug rapamycin which acts in complex with FKBP1A/FKBP12, and specifically inhibits its kinase activity. mTORC2 is also activated by growth factors, but seems to be nutrient-insensitive. mTORC2 associates and is directly activated by ribosomes. mTORC2 may also be regulated by RHEB but in an indirect manner through the PI3K signaling pathway. Serine/threonine protein kinase which is a central regulator of cellular metabolism, growth and survival in response to hormones, growth factors, nutrients, energy and stress signals. MTOR directly or indirectly regulates the phosphorylation of at least 800 proteins. Functions as part of 2 structurally and functionally distinct signaling complexes mTORC1 and mTORC2 (mTOR complex 1 and 2). In response to nutrients, growth factors or amino acids, mTORC1 is recruited to the lysosome membrane and promotes protein, lipid and nucleotide synthesis by phosphorylating key regulators of mRNA translation and ribosome synthesis. This includes phosphorylation of EIF4EBP1 and release of its inhibition toward the elongation initiation factor 4E (eiF4E). Moreover, phosphorylates and activates RPS6KB1 and RPS6KB2 that promote protein synthesis by modulating the activity of their downstream targets including ribosomal protein S6, eukaryotic translation initiation factor EIF4B, and the inhibitor of translation initiation PDCD4. Stimulates the pyrimidine biosynthesis pathway, both by acute regulation through RPS6KB1-mediated phosphorylation of the biosynthetic enzyme CAD, and delayed regulation, through transcriptional enhancement of the pentose phosphate pathway which produces 5-phosphoribosyl-1-pyrophosphate (PRPP), an allosteric activator of CAD at a later step in synthesis, this function is dependent on the mTORC1 complex. Regulates ribosome synthesis by activating RNA polymerase III-dependent transcription through phosphorylation and inhibition of MAF1 an RNA polymerase III-repressor. Activates dormant ribosomes by mediating phosphorylation of SERBP1, leading to SERBP1 inactivation and reactivation of translation. In parallel to protein synthesis, also regulates lipid synthesis through SREBF1/SREBP1 and LPIN1. To maintain energy homeostasis mTORC1 may also regulate mitochondrial biogenesis through regulation of PPARGC1A. In the same time, mTORC1 inhibits catabolic pathways: negatively regulates autophagy through phosphorylation of ULK1. Under nutrient sufficiency, phosphorylates ULK1 at 'Ser-758', disrupting the interaction with AMPK and preventing activation of ULK1. Also prevents autophagy through phosphorylation of the autophagy inhibitor DAP. Also prevents autophagy by phosphorylating RUBCNL/Pacer under nutrient-rich conditions. Prevents autophagy by mediating phosphorylation of AMBRA1, thereby inhibiting AMBRA1 ability to mediate ubiquitination of ULK1 and interaction between AMBRA1 and PPP2CA. mTORC1 exerts a feedback control on upstream growth factor signaling that includes phosphorylation and activation of GRB10 a INSR-dependent signaling suppressor. Among other potential targets mTORC1 may phosphorylate CLIP1 and regulate microtubules. The mTORC1 complex is inhibited in response to starvation and amino acid depletion. The non-canonical mTORC1 complex, which acts independently of RHEB, specifically mediates phosphorylation of MiT/TFE factors MITF, TFEB and TFE3 in the presence of nutrients, promoting their cytosolic retention and inactivation. Upon starvation or lysosomal stress, inhibition of mTORC1 induces dephosphorylation and nuclear translocation of TFEB and TFE3, promoting their transcription factor activity. The mTORC1 complex regulates pyroptosis in macrophages by promoting GSDMD oligomerization. MTOR phosphorylates RPTOR which in turn inhibits mTORC1. As part of the mTORC2 complex, MTOR transduces signals from growth factors to pathways involved in proliferation, cytoskeletal organization, lipogenesis and anabolic output. In response to growth factors, mTORC2 phosphorylates and activates AGC protein kinase family members, including AKT (AKT1, AKT2 and AKT3), PKC (PRKCA, PRKCB and PRKCE) and SGK1. In contrast to mTORC1, mTORC2 is nutrient-insensitive. mTORC2 plays a critical role in AKT1 activation by mediating phosphorylation of different sites depending on the context, such as 'Thr-450', 'Ser-473', 'Ser-477' or 'Thr-479', facilitating the phosphorylation of the activation loop of AKT1 on 'Thr-308' by PDPK1/PDK1 which is a prerequisite for full activation. mTORC2 also regulates the phosphorylation of SGK1 at 'Ser-422'. mTORC2 may regulate the actin cytoskeleton, through phosphorylation of PRKCA, PXN and activation of the Rho-type guanine nucleotide exchange factors RHOA and RAC1A or RAC1B. The mTORC2 complex also phosphorylates various proteins involved in insulin signaling, such as FBXW8 and IGF2BP1. May also regulate insulin signaling by acting as a tyrosine protein kinase that catalyzes phosphorylation of IGF1R and INSR; additional evidence are however required to confirm this result in vivo. Regulates osteoclastogenesis by adjusting the expression of CEBPB isoforms. Plays an important regulatory role in the circadian clock function; regulates period length and rhythm amplitude of the suprachiasmatic nucleus (SCN) and liver clocks. This is Serine/threonine-protein kinase mTOR from Homo sapiens (Human).